The following is a 61-amino-acid chain: Putative antitoxin VapB13 (61 aa).

Belongs to the UPF0165 family.

Its function is as follows. Possibly the antitoxin component of a type II toxin-antitoxin (TA) system. Its cognate toxin is VapC13 (Potential). This is Putative antitoxin VapB13 (vapB13) from Archaeoglobus fulgidus (strain ATCC 49558 / DSM 4304 / JCM 9628 / NBRC 100126 / VC-16).